Here is a 306-residue protein sequence, read N- to C-terminus: GTP cyclohydrolase FolE2 (306 aa).

It belongs to the GTP cyclohydrolase IV family.

The catalysed reaction is GTP + H2O = 7,8-dihydroneopterin 3'-triphosphate + formate + H(+). It functions in the pathway cofactor biosynthesis; 7,8-dihydroneopterin triphosphate biosynthesis; 7,8-dihydroneopterin triphosphate from GTP: step 1/1. Its function is as follows. Converts GTP to 7,8-dihydroneopterin triphosphate. The sequence is that of GTP cyclohydrolase FolE2 from Pseudoalteromonas atlantica (strain T6c / ATCC BAA-1087).